We begin with the raw amino-acid sequence, 616 residues long: MALLQIAEPGQSAAPHQHKLAVGIDLGTTNSLVAAVRSGSSEVLRDEQDRLLIPSIVHLTEDQVIVGYEAGKLASQDPQNTIISVKRLIGRSCTDVQQRYPNLPYQFSATENGLPLLKTRRGLLSPVEISAEILKKLTALAEQRLGGELTGAVITVPAYFDDAQRQSTKDAAKLAGLKVLRLLNEPTAAAIAYGLDSGQEGVIAVYDLGGGTFDVSILRLSKGVFEVLATGGDTALGGDDFDHLLAEWIVKKSTVAPQNDREKRQLIEVANQVKVALTTNDKIRISYAEQNLEITRDEFNSLISGLVKRSLLACRRTLKDANLTPSDILEVVMVGGSTRIPYVREQVGEFFQCTPLTSIDPDKVVALGAAIQADILVGNKPDSEMLLLDVIPLSLGIETMGGLVEKIIPRNTTIPVARAQEFTTFKDGQTAMSVHVLQGEREMVTDCRSLARFTLRGIPAMVAGAARIRVTYQVDADGLLSVTAVEKSTGVQASTQVKPSYGLTDDEIANMLKSSMEHAKEDIQTRLLTEQRVDATRVIESVYSALQQDEDLLDDNELSAVKNALVSLQKLIQEEDSLAIKQGIKMLDQATQEFASRRMDKSIRRALSGQHIEHIK.

This sequence belongs to the heat shock protein 70 family.

In terms of biological role, chaperone involved in the maturation of iron-sulfur cluster-containing proteins. Has a low intrinsic ATPase activity which is markedly stimulated by HscB. The chain is Chaperone protein HscA homolog from Histophilus somni (strain 129Pt) (Haemophilus somnus).